The chain runs to 259 residues: Probable dihydroorotate dehydrogenase B (NAD(+)), electron transfer subunit (259 aa).

Positions 1-89 (MLPLNATITQ…RGPFGKGFTL (89 aa)) constitute an FAD-binding FR-type domain. Residues Cys211, Cys216, Cys219, and Cys229 each coordinate [2Fe-2S] cluster.

This sequence belongs to the PyrK family. In terms of assembly, heterotetramer of 2 PyrK and 2 PyrD type B subunits. [2Fe-2S] cluster is required as a cofactor. FAD serves as cofactor.

It participates in pyrimidine metabolism; UMP biosynthesis via de novo pathway; orotate from (S)-dihydroorotate (NAD(+) route): step 1/1. In terms of biological role, responsible for channeling the electrons from the oxidation of dihydroorotate from the FMN redox center in the PyrD type B subunit to the ultimate electron acceptor NAD(+). This chain is Probable dihydroorotate dehydrogenase B (NAD(+)), electron transfer subunit, found in Methanosarcina mazei (strain ATCC BAA-159 / DSM 3647 / Goe1 / Go1 / JCM 11833 / OCM 88) (Methanosarcina frisia).